The sequence spans 64 residues: Translation machinery-associated protein 7 homolog (64 aa).

The tract at residues 1-64 is disordered; the sequence is MSGRQGGKAK…GGGIKKSGKK (64 aa). Positions 21-50 form a coiled coil; sequence DLSEEDVEFKKKQQEEAKKIKEMAAKAGQR. The span at 28–44 shows a compositional bias: basic and acidic residues; sequence EFKKKQQEEAKKIKEMA. The span at 53-64 shows a compositional bias: gly residues; the sequence is LLGGGIKKSGKK.

It belongs to the TMA7 family.

The protein is Translation machinery-associated protein 7 homolog of Caenorhabditis elegans.